The primary structure comprises 348 residues: Histidinol-phosphate aminotransferase (348 aa).

The residue at position 210 (Lys210) is an N6-(pyridoxal phosphate)lysine.

This sequence belongs to the class-II pyridoxal-phosphate-dependent aminotransferase family. Histidinol-phosphate aminotransferase subfamily. In terms of assembly, homodimer. It depends on pyridoxal 5'-phosphate as a cofactor.

It carries out the reaction L-histidinol phosphate + 2-oxoglutarate = 3-(imidazol-4-yl)-2-oxopropyl phosphate + L-glutamate. It functions in the pathway amino-acid biosynthesis; L-histidine biosynthesis; L-histidine from 5-phospho-alpha-D-ribose 1-diphosphate: step 7/9. The chain is Histidinol-phosphate aminotransferase from Pseudomonas putida (strain W619).